Here is a 259-residue protein sequence, read N- to C-terminus: uncharacterized protein (259 aa).

In terms of domain architecture, ABC transporter spans 4–248 (LQTTNLSKTY…SILDTLSVLG (245 aa)). 42 to 49 (GPSGSGKT) is an ATP binding site.

It belongs to the ABC transporter superfamily.

This is an uncharacterized protein from Bacillus subtilis (strain 168).